We begin with the raw amino-acid sequence, 450 residues long: Tol-Pal system protein TolB (450 aa).

The N-terminal stretch at 1–37 (MIERNGLQRMPFRLNRRHMISGMASAAVLLGSRQALG) is a signal peptide.

Belongs to the TolB family. The Tol-Pal system is composed of five core proteins: the inner membrane proteins TolA, TolQ and TolR, the periplasmic protein TolB and the outer membrane protein Pal. They form a network linking the inner and outer membranes and the peptidoglycan layer.

It localises to the periplasm. Its function is as follows. Part of the Tol-Pal system, which plays a role in outer membrane invagination during cell division and is important for maintaining outer membrane integrity. The polypeptide is Tol-Pal system protein TolB (Nitrobacter winogradskyi (strain ATCC 25391 / DSM 10237 / CIP 104748 / NCIMB 11846 / Nb-255)).